The chain runs to 253 residues: ABC transporter D-alanine-binding periplasmic protein (253 aa).

The first 22 residues, 1–22 (MLSKKFGLSMIVLGIMSSSAFA), serve as a signal peptide directing secretion. D-alanine is bound by residues G95, S97, R102, A147, and E191.

It belongs to the bacterial solute-binding protein 3 family. Monomer.

It localises to the periplasm. Functionally, part of the ABC transporter complex dalSTUV, that imports D-alanine into the cytoplasm. Helps protect the organism from oxidative killing by host neutrophils through sequestration of D-alanine, a substrate that is converted to hydrogen peroxide by the host enzyme DAO (D-amino acid oxidase). DalS shuttles D-alanine from the periplasm to the DalTUV complex situated in the inner membrane and through hydrolysis of ATP, D-alanine is transported across the membrane into the cytoplasm. Not required for the metabolism of D-alanine found in the stem peptide of peptidoglycan. In Salmonella typhimurium (strain LT2 / SGSC1412 / ATCC 700720), this protein is ABC transporter D-alanine-binding periplasmic protein.